We begin with the raw amino-acid sequence, 512 residues long: UDP-N-acetylmuramate--L-alanine ligase (512 aa).

132 to 138 lines the ATP pocket; the sequence is GAHGKTT.

It belongs to the MurCDEF family.

The protein resides in the cytoplasm. The enzyme catalyses UDP-N-acetyl-alpha-D-muramate + L-alanine + ATP = UDP-N-acetyl-alpha-D-muramoyl-L-alanine + ADP + phosphate + H(+). Its pathway is cell wall biogenesis; peptidoglycan biosynthesis. Functionally, cell wall formation. In Bifidobacterium longum (strain DJO10A), this protein is UDP-N-acetylmuramate--L-alanine ligase.